Reading from the N-terminus, the 147-residue chain is Histone-lysine N-methyltransferase, H3 lysine-37 specific (147 aa).

The SET domain occupies 8-116 (SPLEIRDTER…TNEELCISYG (109 aa)).

This sequence belongs to the class V-like SAM-binding methyltransferase superfamily. Homodimer.

It localises to the cytoplasm. It is found in the nucleus. The catalysed reaction is L-lysyl(37)-[histone H3] + S-adenosyl-L-methionine = N(6)-methyl-L-lysyl(37)-[histone H3] + S-adenosyl-L-homocysteine + H(+). The enzyme catalyses N(6)-methyl-L-lysyl(37)-[histone H3] + S-adenosyl-L-methionine = N(6),N(6)-dimethyl-L-lysyl(37)-[histone H3] + S-adenosyl-L-homocysteine + H(+). It carries out the reaction N(6),N(6)-dimethyl-L-lysyl(37)-[histone H3] + S-adenosyl-L-methionine = N(6),N(6),N(6)-trimethyl-L-lysyl(37)-[histone H3] + S-adenosyl-L-homocysteine + H(+). Functionally, histone lysine methyltransferase that specifically mono-, di-, and trimethylates 'Lys-37' of histone H3 to regulate sporulation. This is Histone-lysine N-methyltransferase, H3 lysine-37 specific from Schizosaccharomyces pombe (strain 972 / ATCC 24843) (Fission yeast).